The following is a 519-amino-acid chain: Carboxyl-terminal-processing peptidase 3, chloroplastic (519 aa).

The PDZ domain maps to 186 to 274 (YQSFRIGSDG…IKLKNVNGSG (89 aa)). Residues Ser-407 and Lys-432 each act as charge relay system in the active site.

The protein belongs to the peptidase S41A family.

It is found in the plastid. It localises to the chloroplast thylakoid lumen. It carries out the reaction The enzyme shows specific recognition of a C-terminal tripeptide, Xaa-Yaa-Zaa, in which Xaa is preferably Ala or Leu, Yaa is preferably Ala or Tyr, and Zaa is preferably Ala, but then cleaves at a variable distance from the C-terminus. A typical cleavage is -Ala-Ala-|-Arg-Ala-Ala-Lys-Glu-Asn-Tyr-Ala-Leu-Ala-Ala.. Its function is as follows. Protease involved in the C-terminal processing of the chloroplastic D1 protein of photosystem II. This proteolytic processing is necessary to allow the light-driven assembly of the tetranuclear manganese cluster, which is responsible for photosynthetic water oxidation. The protein is Carboxyl-terminal-processing peptidase 3, chloroplastic (CTPA3) of Arabidopsis thaliana (Mouse-ear cress).